Here is a 162-residue protein sequence, read N- to C-terminus: NADH-quinone oxidoreductase subunit I (162 aa).

2 4Fe-4S ferredoxin-type domains span residues 53-83 (LRRY…IESE) and 93-122 (TRYD…ETRV). Cys-63, Cys-66, Cys-69, Cys-73, Cys-102, Cys-105, Cys-108, and Cys-112 together coordinate [4Fe-4S] cluster.

The protein belongs to the complex I 23 kDa subunit family. As to quaternary structure, NDH-1 is composed of 14 different subunits. Subunits NuoA, H, J, K, L, M, N constitute the membrane sector of the complex. Requires [4Fe-4S] cluster as cofactor.

It is found in the cell inner membrane. It catalyses the reaction a quinone + NADH + 5 H(+)(in) = a quinol + NAD(+) + 4 H(+)(out). Its function is as follows. NDH-1 shuttles electrons from NADH, via FMN and iron-sulfur (Fe-S) centers, to quinones in the respiratory chain. The immediate electron acceptor for the enzyme in this species is believed to be ubiquinone. Couples the redox reaction to proton translocation (for every two electrons transferred, four hydrogen ions are translocated across the cytoplasmic membrane), and thus conserves the redox energy in a proton gradient. This Nitrosomonas europaea (strain ATCC 19718 / CIP 103999 / KCTC 2705 / NBRC 14298) protein is NADH-quinone oxidoreductase subunit I.